The chain runs to 214 residues: Putative ankyrin repeat protein RF_1081 (214 aa).

Residues 1-14 (MRKQQIPTLSTSAL) are compositionally biased toward polar residues. Residues 1–32 (MRKQQIPTLSTSALDKSPGPGSPDSDIEMKST) are disordered. Residues 67–135 (NPNALLHEAA…EEPILVTKKD (69 aa)) form an ANK repeat.

The sequence is that of Putative ankyrin repeat protein RF_1081 from Rickettsia felis (strain ATCC VR-1525 / URRWXCal2) (Rickettsia azadi).